The sequence spans 257 residues: Ribonuclease HII (257 aa).

The region spanning 70 to 257 (EFIAGIDEVG…PIKSMVAGGN (188 aa)) is the RNase H type-2 domain. Asp76, Glu77, and Asp168 together coordinate a divalent metal cation.

This sequence belongs to the RNase HII family. Mn(2+) serves as cofactor. It depends on Mg(2+) as a cofactor.

It localises to the cytoplasm. It catalyses the reaction Endonucleolytic cleavage to 5'-phosphomonoester.. Endonuclease that specifically degrades the RNA of RNA-DNA hybrids. This Streptococcus suis (strain 98HAH33) protein is Ribonuclease HII.